The following is a 434-amino-acid chain: Beta-enolase (434 aa).

Ala2 is modified (N-acetylalanine). Thr72 bears the Phosphothreonine mark. Phosphoserine is present on residues Ser83 and Ser157. 2 residues coordinate substrate: His158 and Glu167. Ser176 is modified (phosphoserine). Thr205 bears the Phosphothreonine mark. Residue Glu210 is the Proton donor of the active site. Phosphothreonine is present on Thr229. Tyr236 carries the post-translational modification Phosphotyrosine. Asp245 is a binding site for Mg(2+). Position 263 is a phosphoserine (Ser263). Residues Glu293 and Asp318 each coordinate substrate. Mg(2+) is bound by residues Glu293 and Asp318. Residue Lys343 is the Proton acceptor of the active site. Substrate is bound by residues 370–373 and Lys394; that span reads SHRS.

The protein belongs to the enolase family. As to quaternary structure, mammalian enolase is composed of 3 isozyme subunits, alpha, beta and gamma, which can form homodimers or heterodimers which are cell-type and development-specific. Interacts with PNKD. The cofactor is Mg(2+). The alpha/alpha homodimer is expressed in embryo and in most adult tissues. The alpha/beta heterodimer and the beta/beta homodimer are found in striated muscle, and the alpha/gamma heterodimer and the gamma/gamma homodimer in neurons.

The protein resides in the cytoplasm. The enzyme catalyses (2R)-2-phosphoglycerate = phosphoenolpyruvate + H2O. It functions in the pathway carbohydrate degradation; glycolysis; pyruvate from D-glyceraldehyde 3-phosphate: step 4/5. Functionally, glycolytic enzyme that catalyzes the conversion of 2-phosphoglycerate to phosphoenolpyruvate. Appears to have a function in striated muscle development and regeneration. This is Beta-enolase (Eno3) from Rattus norvegicus (Rat).